A 548-amino-acid polypeptide reads, in one-letter code: MQRSIAMTAKRFLHRNLLENGKPRTASSPSFSHCSSCRCWVRASSSVSGGDLRERLSKTRLRDIKLNDAIDLFSDMVKSRPFPSIVDFNRLLSAIVKLKKYDVVISLGKKMEVLGIRNDLYTFNIVINCFCCCFQVSLALSILGKMLKLGYEPDRVTIGSLVNGFCRRNRVSDAVSLVDKMVEIGYKPDIVAYNAIIDSLCKTKRVNDAFDFFKEIERKGIRPNVVTYTALVNGLCNSSRWSDAARLLSDMIKKKITPNVITYSALLDAFVKNGKVLEAKELFEEMVRMSIDPDIVTYSSLINGLCLHDRIDEANQMFDLMVSKGCLADVVSYNTLINGFCKAKRVEDGMKLFREMSQRGLVSNTVTYNTLIQGFFQAGDVDKAQEFFSQMDFFGISPDIWTYNILLGGLCDNGELEKALVIFEDMQKREMDLDIVTYTTVIRGMCKTGKVEEAWSLFCSLSLKGLKPDIVTYTTMMSGLCTKGLLHEVEALYTKMKQEGLMKNDCTLSDGDITLSAELIKKMLSCGYAPSLLKDIKSGVCKKALSLL.

A mitochondrion-targeting transit peptide spans 1–43; it reads MQRSIAMTAKRFLHRNLLENGKPRTASSPSFSHCSSCRCWVRA. PPR repeat units follow at residues 84-118, 119-153, 154-188, 189-223, 224-258, 259-293, 294-328, 329-363, 364-398, 399-433, 434-468, and 469-503; these read SIVDFNRLLSAIVKLKKYDVVISLGKKMEVLGIRN, DLYTFNIVINCFCCCFQVSLALSILGKMLKLGYEP, DRVTIGSLVNGFCRRNRVSDAVSLVDKMVEIGYKP, DIVAYNAIIDSLCKTKRVNDAFDFFKEIERKGIRP, NVVTYTALVNGLCNSSRWSDAARLLSDMIKKKITP, NVITYSALLDAFVKNGKVLEAKELFEEMVRMSIDP, DIVTYSSLINGLCLHDRIDEANQMFDLMVSKGCLA, DVVSYNTLINGFCKAKRVEDGMKLFREMSQRGLVS, NTVTYNTLIQGFFQAGDVDKAQEFFSQMDFFGISP, DIWTYNILLGGLCDNGELEKALVIFEDMQKREMDL, DIVTYTTVIRGMCKTGKVEEAWSLFCSLSLKGLKP, and DIVTYTTMMSGLCTKGLLHEVEALYTKMKQEGLMK.

Belongs to the PPR family. P subfamily.

Its subcellular location is the mitochondrion. The polypeptide is Pentatricopeptide repeat-containing protein At1g62680, mitochondrial (Arabidopsis thaliana (Mouse-ear cress)).